A 91-amino-acid chain; its full sequence is MDEVKYPVLTEKSIRLLERNQYTFNVDSQLNKTKMKIWIEHFFDVKVIAMNSYRLPEKGGKGGSMIGHPIRCKRMIITLKPGDSIPLFSEQ.

Belongs to the universal ribosomal protein uL23 family. As to quaternary structure, part of the 50S ribosomal subunit.

The protein resides in the plastid. Its subcellular location is the chloroplast. Functionally, binds to 23S rRNA. This Picea abies (Norway spruce) protein is Large ribosomal subunit protein uL23c (rpl23).